We begin with the raw amino-acid sequence, 263 residues long: Hydroxyacylglutathione hydrolase (263 aa).

Histidine 56, histidine 58, aspartate 60, histidine 61, histidine 115, aspartate 135, and histidine 175 together coordinate Zn(2+).

It belongs to the metallo-beta-lactamase superfamily. Glyoxalase II family. In terms of assembly, monomer. The cofactor is Zn(2+).

It catalyses the reaction an S-(2-hydroxyacyl)glutathione + H2O = a 2-hydroxy carboxylate + glutathione + H(+). Its pathway is secondary metabolite metabolism; methylglyoxal degradation; (R)-lactate from methylglyoxal: step 2/2. Thiolesterase that catalyzes the hydrolysis of S-D-lactoyl-glutathione to form glutathione and D-lactic acid. The protein is Hydroxyacylglutathione hydrolase of Polaromonas sp. (strain JS666 / ATCC BAA-500).